A 160-amino-acid chain; its full sequence is UPF0178 protein PA5247 (160 aa).

It belongs to the UPF0178 family.

This is UPF0178 protein PA5247 from Pseudomonas aeruginosa (strain ATCC 15692 / DSM 22644 / CIP 104116 / JCM 14847 / LMG 12228 / 1C / PRS 101 / PAO1).